A 991-amino-acid polypeptide reads, in one-letter code: MSSIVNRASSASLPNFLAWRALGFRTICSGRLGFAPSVPDSPVSAGTKILESFKEEFEVGSRVVSFETGKIARFANGSVVLGMDETKVLSTVTCAKTDSPRDFLPLTVDYQEKQYAQGLIPNTYMRREGAPKERELLCGRLIDRPIRPLFPTGFYHEVQIMASVLSSDGKQDPDILAANASSAALMLSDVPWGGPIGVIRIGRICGQFVVNPTMDELSSSDLNLIYACTRDKTMMIDVQSREISEKDLAAALRLAHPEAVKYLDPQIRLAEKAGKQKKEYKLSMLSDKTLEKVADLAATRIESVFTDPSYGKFERGEALDNIGKDVRKVFEEEGDQESLSILPKAVDTVRKKVVRSRMISDGFRVDGRHVDEVRPIYCESHYLPALHGSALFSRGDTQVLCTVTLGAPAEAQSLDSLVGPPKKRFMLHYSFPPYCTNEVGKRGGLNRREVGHGTLAEKALLAVLPPEEAFPYTIRINSEVMSSDGSTSMASVCGGSMALMDAGIPLRAHVAGVSVGLITDVDPSSGEIKDYRIVTDILGLEDHLGDMDFKIAGTRDGVTAIQLDIKPAGIPLDIVCESLENAREARLQILDHMERNINSPRGQDGAYSPRLATLKYSNDSLRTLIGPMGVLKRKIEVETGARLSIDNGTLTIVAKNQDVMEKAQEQVDFIIGRELVVGGVYKGTVSSIKEYGAFVEFPGGQQGLLHMSELSHEPVSKVSDVLDIGQCITTMCIETDVRGNIKLSRKALLPKPKRKPASDAGKDPVMKESSTVYIENSSVGEIVASMPSIVTPLQKSRLSVPAVVIRTAVECNEAEKSSPVNDNDKPRRAATSKPDRKPKSTASKLIATQKEEEALESIAPEETSAECGEILKQDGKLKSVSPKNNSTASNLVSFSKAKKSTMKENLSENKAEESASVSTRKLKIGTEMTATVDHVRALGLVLDLGGEIRGMYIFQGDKDKFKKGDTLRVKCTSFNTKGVPVMALVDEEGEE.

The transit peptide at 1-39 (MSSIVNRASSASLPNFLAWRALGFRTICSGRLGFAPSVP) directs the protein to the mitochondrion. The 59-residue stretch at 609–667 (PRLATLKYSNDSLRTLIGPMGVLKRKIEVETGARLSIDNGTLTIVAKNQDVMEKAQEQV) folds into the KH domain. In terms of domain architecture, S1 motif 1 spans 678 to 746 (GGVYKGTVSS…VRGNIKLSRK (69 aa)). Residues 813 to 865 (EAEKSSPVNDNDKPRRAATSKPDRKPKSTASKLIATQKEEEALESIAPEETSA) form a disordered region. Positions 822-838 (DNDKPRRAATSKPDRKP) are enriched in basic and acidic residues. The S1 motif 2 domain occupies 925-987 (GTEMTATVDH…GVPVMALVDE (63 aa)).

Belongs to the polyribonucleotide nucleotidyltransferase family.

The protein resides in the mitochondrion. The enzyme catalyses RNA(n+1) + phosphate = RNA(n) + a ribonucleoside 5'-diphosphate. Involved in the 3'-end maturation of mitochondrial mRNAs, rRNAs and tRNAs. Functions as a poly(A) mRNA 3'-5' degrading phosphorylase and is required for the degradation of highly expressed transcripts of non-coding regions. The sequence is that of Polyribonucleotide nucleotidyltransferase 2, mitochondrial (PNP2) from Arabidopsis thaliana (Mouse-ear cress).